The following is a 141-amino-acid chain: Glutamyl-tRNA(Gln) amidotransferase subunit C, chloroplastic/mitochondrial (141 aa).

The protein belongs to the GatC family. As to quaternary structure, subunit of the heterotrimeric GatCAB amidotransferase (AdT) complex, composed of A, B and C subunits.

Its subcellular location is the mitochondrion. The protein localises to the plastid. It localises to the chloroplast. It catalyses the reaction L-glutamyl-tRNA(Gln) + L-glutamine + ATP + H2O = L-glutaminyl-tRNA(Gln) + L-glutamate + ADP + phosphate + H(+). Allows the formation of correctly charged Gln-tRNA(Gln) through the transamidation of misacylated Glu-tRNA(Gln) in chloroplasts and mitochondria. The reaction takes place in the presence of glutamine and ATP through an activated gamma-phospho-Glu-tRNA(Gln). This Populus trichocarpa (Western balsam poplar) protein is Glutamyl-tRNA(Gln) amidotransferase subunit C, chloroplastic/mitochondrial.